A 542-amino-acid polypeptide reads, in one-letter code: MFS thioclapurine efflux transporter tcpA (542 aa).

A compositionally biased stretch (basic and acidic residues) spans 1–10; sequence MATVGTEEKN. The disordered stretch occupies residues 1–24; that stretch reads MATVGTEEKNPIGSASNTAEPNVT. Positions 13–24 are enriched in polar residues; it reads GSASNTAEPNVT. A glycan (N-linked (GlcNAc...) asparagine) is linked at asparagine 22. Transmembrane regions (helical) follow at residues 32–52, 75–97, and 103–123; these read SGFK…LCGL, GWYT…KLYT, and MILL…AAAP. Asparagine 124 carries N-linked (GlcNAc...) asparagine glycosylation. Helical transmembrane passes span 133–153, 161–181, 193–213, 234–254, 265–285, and 307–327; these read AIAG…LVHA, ALLG…PFIG, CFII…FFVF, IPEI…LQWG, IIAL…LQVL, and IFAL…PIYF. An N-linked (GlcNAc...) asparagine glycan is attached at asparagine 332. A helical transmembrane segment spans residues 339-359; the sequence is GVNVMPLILGFLVMSIISGVI. Asparagine 361 carries N-linked (GlcNAc...) asparagine glycosylation. Transmembrane regions (helical) follow at residues 370-390, 396-416, 427-447, and 500-520; these read MFLC…FDVG, WIGY…QPIV, VPFG…IFVA, and VLGQ…LGSL.

It belongs to the major facilitator superfamily.

It is found in the cell membrane. Functionally, MFS efflux transporter probably involved in thioclapurine export. The polypeptide is MFS thioclapurine efflux transporter tcpA (Claviceps purpurea (strain 20.1) (Ergot fungus)).